Consider the following 290-residue polypeptide: Shikimate kinase (290 aa).

81–91 (PIASGLKSSSA) is a binding site for ATP.

It belongs to the GHMP kinase family. Archaeal shikimate kinase subfamily.

Its subcellular location is the cytoplasm. It carries out the reaction shikimate + ATP = 3-phosphoshikimate + ADP + H(+). Its pathway is metabolic intermediate biosynthesis; chorismate biosynthesis; chorismate from D-erythrose 4-phosphate and phosphoenolpyruvate: step 5/7. This chain is Shikimate kinase, found in Methanocella arvoryzae (strain DSM 22066 / NBRC 105507 / MRE50).